We begin with the raw amino-acid sequence, 170 residues long: Urease accessory protein UreE (170 aa).

Residues Gly144–Asp170 form a disordered region. Positions His146–His162 are enriched in basic and acidic residues.

The protein belongs to the UreE family.

The protein localises to the cytoplasm. Its function is as follows. Involved in urease metallocenter assembly. Binds nickel. Probably functions as a nickel donor during metallocenter assembly. The polypeptide is Urease accessory protein UreE (Brucella anthropi (strain ATCC 49188 / DSM 6882 / CCUG 24695 / JCM 21032 / LMG 3331 / NBRC 15819 / NCTC 12168 / Alc 37) (Ochrobactrum anthropi)).